The primary structure comprises 459 residues: Pentatricopeptide repeat-containing protein At5g18390, mitochondrial (459 aa).

The transit peptide at 1–7 directs the protein to the mitochondrion; the sequence is MLLLRRY. PPR repeat units lie at residues 110–144, 145–175, 181–215, 216–250, 251–285, 286–320, 321–355, 356–390, and 391–425; these read TSME…SLDI, SGET…VPKT, TVDV…GLKP, DKRT…GFNP, PARG…GFVP, DIQT…GLCV, DIDT…GHKP, FPSL…AHPP, and NRPV…GLVP.

This sequence belongs to the PPR family. P subfamily.

It is found in the mitochondrion. This Arabidopsis thaliana (Mouse-ear cress) protein is Pentatricopeptide repeat-containing protein At5g18390, mitochondrial.